Here is an 80-residue protein sequence, read N- to C-terminus: Metallothionein-like protein type 2, MT2-4/MT2-25 (80 aa).

The protein belongs to the metallothionein superfamily. Type 15 family.

Its function is as follows. Metallothioneins have a high content of cysteine residues that bind various heavy metals. The sequence is that of Metallothionein-like protein type 2, MT2-4/MT2-25 from Brassica juncea (Indian mustard).